A 235-amino-acid chain; its full sequence is Large ribosomal subunit protein uL1 (235 aa).

It belongs to the universal ribosomal protein uL1 family. In terms of assembly, part of the 50S ribosomal subunit.

Binds directly to 23S rRNA. The L1 stalk is quite mobile in the ribosome, and is involved in E site tRNA release. In terms of biological role, protein L1 is also a translational repressor protein, it controls the translation of the L11 operon by binding to its mRNA. This chain is Large ribosomal subunit protein uL1, found in Synechococcus sp. (strain CC9605).